The sequence spans 122 residues: Large ribosomal subunit protein uL14 (122 aa).

Belongs to the universal ribosomal protein uL14 family. In terms of assembly, part of the 50S ribosomal subunit. Forms a cluster with proteins L3 and L19. In the 70S ribosome, L14 and L19 interact and together make contacts with the 16S rRNA in bridges B5 and B8.

Functionally, binds to 23S rRNA. Forms part of two intersubunit bridges in the 70S ribosome. This Rickettsia bellii (strain OSU 85-389) protein is Large ribosomal subunit protein uL14.